The chain runs to 381 residues: Regulatory protein RapF (381 aa).

Mn(2+) contacts are provided by L40, M43, and E45. TPR repeat units follow at residues 101-137, 148-181, 182-215, 222-255, 262-295, and 337-370; these read YYFNFFRGMYELDQREYLSAIKFFKKAESKLIFVKDR, SESYYYMKQTYFSMDYARQAYEIYKEHEAYNIRL, LQCHSLFATNFLDLKQYEDAISHFQKAYSMAEAE, GRTLYNIGLCKNSQSQYEDAIPYFKRAIAVFEES, PQAYFLITQIHYKLGKIDKAHEYHSKGMAYSQKA, and EDFAIDVAKYYHERKNFQKASAYFLKVEQVRQLI.

The protein belongs to the Rap family. In terms of assembly, monomer. Is monomeric either alone or in complex with PhrF. Interacts specifically with the C-terminal DNA-binding domain of ComA. Interacts with PhrF.

It is found in the cytoplasm. Inhibited by PhrF, which prevents RapF-ComA interaction. Interaction with PhrF induces a conformational change in RapF, which is propagated to the ComA binding site and causes the dissociation of ComA from RapF. Functionally, involved in the regulation of genetic competence development. Inhibits the activity of ComA, a transcriptional factor that regulates the development of genetic competence. Acts by binding to ComA, leading to the inhibition of its DNA-binding activity. May also affect transcription independently of ComA. This Bacillus subtilis (strain 168) protein is Regulatory protein RapF (rapF).